The chain runs to 119 residues: MLSNILPLSIGAIFGTTARWLLNLAVPASLSPATGNLFANWTGALLIGIFAETVSHPQWKLLLITGFFGSLTTLSGFSLETVTLLQSNRPASALANIFLHTAGSLLLTWLGLKIGTAVK.

Transmembrane regions (helical) follow at residues 5–25, 30–50, 59–79, and 92–112; these read ILPL…LNLA, LSPA…IGIF, WKLL…GFSL, and SALA…WLGL. Positions 69 and 72 each coordinate Na(+).

It belongs to the fluoride channel Fluc/FEX (TC 1.A.43) family.

It is found in the cell inner membrane. The catalysed reaction is fluoride(in) = fluoride(out). Its activity is regulated as follows. Na(+) is not transported, but it plays an essential structural role and its presence is essential for fluoride channel function. Functionally, fluoride-specific ion channel. Important for reducing fluoride concentration in the cell, thus reducing its toxicity. This Neisseria gonorrhoeae (strain NCCP11945) protein is Fluoride-specific ion channel FluC.